Here is a 610-residue protein sequence, read N- to C-terminus: UvrABC system protein C (610 aa).

One can recognise a GIY-YIG domain in the interval 16–94 (SQPGVYRMYD…IKLYQPRYNV (79 aa)). One can recognise a UVR domain in the interval 204 to 239 (QQVLTQLITRMEEASQQLHFEDAARIRDQIQAVRRV).

Belongs to the UvrC family. Interacts with UvrB in an incision complex.

The protein resides in the cytoplasm. The UvrABC repair system catalyzes the recognition and processing of DNA lesions. UvrC both incises the 5' and 3' sides of the lesion. The N-terminal half is responsible for the 3' incision and the C-terminal half is responsible for the 5' incision. In Yersinia pseudotuberculosis serotype O:1b (strain IP 31758), this protein is UvrABC system protein C.